A 284-amino-acid chain; its full sequence is 2-dehydro-3-deoxyphosphooctonate aldolase (284 aa).

This sequence belongs to the KdsA family.

The protein resides in the cytoplasm. The catalysed reaction is D-arabinose 5-phosphate + phosphoenolpyruvate + H2O = 3-deoxy-alpha-D-manno-2-octulosonate-8-phosphate + phosphate. Its pathway is carbohydrate biosynthesis; 3-deoxy-D-manno-octulosonate biosynthesis; 3-deoxy-D-manno-octulosonate from D-ribulose 5-phosphate: step 2/3. The protein operates within bacterial outer membrane biogenesis; lipopolysaccharide biosynthesis. The chain is 2-dehydro-3-deoxyphosphooctonate aldolase from Pectobacterium atrosepticum (strain SCRI 1043 / ATCC BAA-672) (Erwinia carotovora subsp. atroseptica).